Reading from the N-terminus, the 123-residue chain is MRKGVVAGLCLALVVMCLYLPQPCEAQYEALVTSILGKLTGLWHNDSVDFMGHICYFRRRPKIRRFKLYHEGKFWCPGWAPFEGRSRTKSRSGSSREATKDFVRKALQNGLVTQQDASLWLNN.

The N-terminal stretch at 1 to 26 (MRKGVVAGLCLALVVMCLYLPQPCEA) is a signal peptide. The N-linked (GlcNAc...) asparagine glycan is linked to asparagine 45. A disulfide bridge connects residues cysteine 55 and cysteine 76.

As to expression, isoform 1 is highly expressed in muscle and stomach, moderately in heart and gill and at lower levels in hemocytes and hepatopancreas. Isoform 2 is mainly expressed in gill, hepatopancreas, muscle and eyestalk.

The protein resides in the secreted. In terms of biological role, may bind to bacterial LPS and thus specifically inhibit the LPS-mediated activation of the hemolymph coagulation. It has a strong antibacterial effect especially on the growth of Gram-negative bacteria. The polypeptide is Anti-lipopolysaccharide factor (Portunus trituberculatus (Swimming crab)).